Consider the following 112-residue polypeptide: MTELAQMKCEACQADAPKVTDAELAELIRMIPDWGVEVRDGIMQLERVYKFKNFKLAMEFTNKLADLAEEEFHHPGILTEWGKVTVTWWSHSIKGLHRNDFIMAAKTDQLLD.

It belongs to the pterin-4-alpha-carbinolamine dehydratase family.

It carries out the reaction (4aS,6R)-4a-hydroxy-L-erythro-5,6,7,8-tetrahydrobiopterin = (6R)-L-erythro-6,7-dihydrobiopterin + H2O. The sequence is that of Putative pterin-4-alpha-carbinolamine dehydratase from Shewanella loihica (strain ATCC BAA-1088 / PV-4).